The following is a 49-amino-acid chain: Large ribosomal subunit protein bL33A (49 aa).

Belongs to the bacterial ribosomal protein bL33 family.

This Bacillus licheniformis (strain ATCC 14580 / DSM 13 / JCM 2505 / CCUG 7422 / NBRC 12200 / NCIMB 9375 / NCTC 10341 / NRRL NRS-1264 / Gibson 46) protein is Large ribosomal subunit protein bL33A.